Reading from the N-terminus, the 694-residue chain is Glycine--tRNA ligase beta subunit (694 aa).

It belongs to the class-II aminoacyl-tRNA synthetase family. As to quaternary structure, tetramer of two alpha and two beta subunits.

It is found in the cytoplasm. The enzyme catalyses tRNA(Gly) + glycine + ATP = glycyl-tRNA(Gly) + AMP + diphosphate. The sequence is that of Glycine--tRNA ligase beta subunit from Acidithiobacillus ferrooxidans (strain ATCC 23270 / DSM 14882 / CIP 104768 / NCIMB 8455) (Ferrobacillus ferrooxidans (strain ATCC 23270)).